The primary structure comprises 57 residues: Large ribosomal subunit protein bL32 (57 aa).

Residues 1–25 (MATPSNKNSKSHKRNRRGHIGLNVP) form a disordered region. A compositionally biased stretch (basic residues) spans 9-19 (SKSHKRNRRGH).

Belongs to the bacterial ribosomal protein bL32 family.

In Leuconostoc mesenteroides subsp. mesenteroides (strain ATCC 8293 / DSM 20343 / BCRC 11652 / CCM 1803 / JCM 6124 / NCDO 523 / NBRC 100496 / NCIMB 8023 / NCTC 12954 / NRRL B-1118 / 37Y), this protein is Large ribosomal subunit protein bL32.